Reading from the N-terminus, the 133-residue chain is DNA-directed RNA polymerases I and III subunit RPAC2 (133 aa).

Met-1 carries the post-translational modification N-acetylmethionine. A disordered region spans residues 1–22 (MEEDQELERKMSGVKTSMAEGE).

This sequence belongs to the archaeal Rpo11/eukaryotic RPB11/RPC19 RNA polymerase subunit family. Component of the RNA polymerase I and RNA polymerase III complexes consisting of at least 13 and 17 subunits, respectively. The transcriptionally active RNA polymerase III complex consists of a ten-subunit horseshoe-shaped catalytic core composed of POLR3A/RPC1, POLR3B/RPC2, POLR1C/RPAC1, POLR1D/RPAC2, POLR3K/RPC10, POLR2E/RPABC1, POLR2F/RPABC2, POLR2H/RPABC3, POLR2K/RPABC4 and POLR2L/RPABC5; a mobile stalk composed of two subunits POLR3H/RPC8 and CRCP/RPC9, protruding from the core and functioning primarily in transcription initiation; and additional subunits homologous to general transcription factors of the RNA polymerase II machinery, POLR3C/RPC3-POLR3F/RPC6-POLR3G/RPC7 heterotrimer required for transcription initiation and POLR3D/RPC4-POLR3E/RPC5 heterodimer involved in both transcription initiation and termination.

Its subcellular location is the nucleus. Functionally, DNA-dependent RNA polymerase catalyzes the transcription of DNA into RNA using the four ribonucleoside triphosphates as substrates. Common component of RNA polymerases I and III which synthesize ribosomal RNA precursor pre-rRNA and short non-coding RNAs including 5S rRNA, snRNAs, tRNAs and miRNAs, respectively. The polypeptide is DNA-directed RNA polymerases I and III subunit RPAC2 (POLR1D) (Bos taurus (Bovine)).